We begin with the raw amino-acid sequence, 492 residues long: Fibroblast growth factor receptor substrate 3 (492 aa).

Gly2 carries N-myristoyl glycine lipidation. The region spanning 13-115 is the IRS-type PTB domain; it reads VPHNHPTKFK…QCNSINVTEE (103 aa). Disordered regions lie at residues 125-205, 337-413, and 425-492; these read PQEL…EDRR, QQLR…EPPR, and WGTA…DLPL. Composition is skewed to polar residues over residues 133-147 and 166-185; these read GSSQPTGYTVSSFSN and PSTSSLRHPSPGEESTQTLI. Over residues 374-385 the composition is skewed to low complexity; the sequence is TSTRASARSHSS.

As to quaternary structure, binds NTRK1, FGFR1, NGFR, GRB2, PTPN11 and ERK2. Phosphorylated on tyrosine residues upon stimulation by BFGF or NGFB.

The protein localises to the membrane. Adapter protein that links FGF and NGF receptors to downstream signaling pathways. Involved in the activation of MAP kinases. Down-regulates ERK2 signaling by interfering with the phosphorylation and nuclear translocation of ERK2. This is Fibroblast growth factor receptor substrate 3 (Frs3) from Rattus norvegicus (Rat).